The primary structure comprises 103 residues: Small ribosomal subunit protein uS10 (103 aa).

It belongs to the universal ribosomal protein uS10 family. In terms of assembly, part of the 30S ribosomal subunit.

In terms of biological role, involved in the binding of tRNA to the ribosomes. This chain is Small ribosomal subunit protein uS10, found in Pseudoalteromonas atlantica (strain T6c / ATCC BAA-1087).